Reading from the N-terminus, the 110-residue chain is Thiosulfate sulfurtransferase GlpE (110 aa).

The region spanning 17–105 (RENGAQVVDI…WRSVYPADTS (89 aa)) is the Rhodanese domain. Residue Cys65 is the Cysteine persulfide intermediate of the active site.

This sequence belongs to the GlpE family.

It is found in the cytoplasm. The catalysed reaction is thiosulfate + hydrogen cyanide = thiocyanate + sulfite + 2 H(+). It carries out the reaction thiosulfate + [thioredoxin]-dithiol = [thioredoxin]-disulfide + hydrogen sulfide + sulfite + 2 H(+). In terms of biological role, transferase that catalyzes the transfer of sulfur from thiosulfate to thiophilic acceptors such as cyanide or dithiols. May function in a CysM-independent thiosulfate assimilation pathway by catalyzing the conversion of thiosulfate to sulfite, which can then be used for L-cysteine biosynthesis. This is Thiosulfate sulfurtransferase GlpE from Pseudomonas paraeruginosa (strain DSM 24068 / PA7) (Pseudomonas aeruginosa (strain PA7)).